We begin with the raw amino-acid sequence, 373 residues long: Indole glucosinolate O-methyltransferase 4 (373 aa).

S-adenosyl-L-homocysteine-binding residues include Gly217, Asp240, Asp260, Met261, and Lys274. His278 functions as the Proton acceptor in the catalytic mechanism.

The protein belongs to the class I-like SAM-binding methyltransferase superfamily. Cation-independent O-methyltransferase family. In terms of assembly, interacts with B'GAMMA.

It participates in secondary metabolite biosynthesis. Its function is as follows. Involved in indole glucosinolate biosynthesis. Catalyzes methoxylation reactions of the glucosinolate indole ring. Converts the hydroxy intermediates 4-hydroxy-indol-3-yl-methylglucosinolate (4OH-I3M) and 1-hydroxy-indol-3-yl-methylglucosinolate (1OH-I3M) to 4-methoxy-indol-3-yl-methylglucosinolate (4MO-I3M) and 1-methoxy-indol-3-yl-methylglucosinolate(1MO-I3M), respectively. This chain is Indole glucosinolate O-methyltransferase 4, found in Arabidopsis thaliana (Mouse-ear cress).